The primary structure comprises 307 residues: Homoserine O-acetyltransferase (307 aa).

Catalysis depends on Cys142, which acts as the Acyl-thioester intermediate. Lys163 and Ser192 together coordinate substrate. His235 serves as the catalytic Proton acceptor. Glu237 is a catalytic residue. Position 249 (Arg249) interacts with substrate.

The protein belongs to the MetA family.

It is found in the cytoplasm. The enzyme catalyses L-homoserine + acetyl-CoA = O-acetyl-L-homoserine + CoA. It functions in the pathway amino-acid biosynthesis; L-methionine biosynthesis via de novo pathway; O-acetyl-L-homoserine from L-homoserine: step 1/1. In terms of biological role, transfers an acetyl group from acetyl-CoA to L-homoserine, forming acetyl-L-homoserine. The chain is Homoserine O-acetyltransferase from Sinorhizobium fredii (strain NBRC 101917 / NGR234).